The chain runs to 196 residues: Probable malonic semialdehyde reductase RutE (196 aa).

Belongs to the nitroreductase family. HadB/RutE subfamily. FMN serves as cofactor.

It carries out the reaction 3-hydroxypropanoate + NADP(+) = 3-oxopropanoate + NADPH + H(+). May reduce toxic product malonic semialdehyde to 3-hydroxypropionic acid, which is excreted. The protein is Probable malonic semialdehyde reductase RutE of Klebsiella pneumoniae (strain 342).